We begin with the raw amino-acid sequence, 570 residues long: Small ribosomal subunit protein bS1 (570 aa).

S1 motif domains follow at residues 52–116, 134–199, 220–288, 305–375, 392–462, and 479–548; these read GAIL…LSRE, GSIV…VSRR, GERR…LGLK, GKRV…LGLK, GLRV…LGVK, and GSDI…LSIK.

This sequence belongs to the bacterial ribosomal protein bS1 family.

In terms of biological role, binds mRNA; thus facilitating recognition of the initiation point. It is needed to translate mRNA with a short Shine-Dalgarno (SD) purine-rich sequence. The chain is Small ribosomal subunit protein bS1 (rpsA) from Chlamydia muridarum (strain MoPn / Nigg).